Here is a 367-residue protein sequence, read N- to C-terminus: Cyclin-Y-like protein 1 (367 aa).

A phosphoserine mark is found at serine 73, serine 111, and serine 118. The 106-residue stretch at 186-291 (EYFKHDPEHK…FLELLQFNIN (106 aa)) folds into the Cyclin N-terminal domain. Residue serine 352 is modified to Phosphoserine.

This sequence belongs to the cyclin family. Cyclin Y subfamily. In terms of assembly, interacts with CDK16; this interaction mutually increases the stability of CDK16 and CCNYL1 and increases the kinase activity of CDK16. As to expression, highly expressed in the testis. Largely restricted to germ cells in the testis.

It is found in the cell membrane. Key regulator of Wnt signaling implicated in various biological processes including male fertility, embryonic neurogenesis and cortex development. Activates the cyclin-dependent kinase CDK16, and promotes sperm maturation. The polypeptide is Cyclin-Y-like protein 1 (Mus musculus (Mouse)).